A 551-amino-acid polypeptide reads, in one-letter code: L-lactate permease (551 aa).

A run of 12 helical transmembrane segments spans residues 13–33 (NIWL…FALI), 37–57 (LKGY…ALLF), 70–90 (VYGF…AVFV), 131–151 (GAAG…GLGF), 159–179 (LCLI…PILV), 194–214 (MVGR…MAIM), 244–264 (FIGP…CLTL), 366–386 (FDWF…SIVW), 405–425 (LALP…SNYS), 438–458 (TGHA…FLTG), 494–514 (VTGK…VGLV), and 530–550 (IFTC…TWMI).

It belongs to the lactate permease family.

It is found in the cell inner membrane. The enzyme catalyses (S)-lactate(in) + H(+)(in) = (S)-lactate(out) + H(+)(out). It catalyses the reaction (R)-lactate(in) + H(+)(in) = (R)-lactate(out) + H(+)(out). It carries out the reaction glycolate(in) + H(+)(in) = glycolate(out) + H(+)(out). In terms of biological role, uptake of L-lactate across the membrane. Can also transport D-lactate and glycolate. Seems to be driven by a proton motive force. The sequence is that of L-lactate permease (lldP) from Escherichia coli O6:H1 (strain CFT073 / ATCC 700928 / UPEC).